Consider the following 661-residue polypeptide: Glycogen debranching enzyme (661 aa).

Asp-338 functions as the Nucleophile in the catalytic mechanism. The active-site Proton donor is Glu-373. Residues 460 to 481 (NQLNGEGNRDGSDRNFSNNHGV) form a disordered region.

It belongs to the glycosyl hydrolase 13 family.

The catalysed reaction is Hydrolysis of (1-&gt;6)-alpha-D-glucosidic linkages to branches with degrees of polymerization of three or four glucose residues in limit dextrin.. Its pathway is glycan degradation; glycogen degradation. In terms of biological role, removes maltotriose and maltotetraose chains that are attached by 1,6-alpha-linkage to the limit dextrin main chain, generating a debranched limit dextrin. The sequence is that of Glycogen debranching enzyme from Serratia proteamaculans (strain 568).